The chain runs to 576 residues: Quinone-reactive Ni/Fe-hydrogenase large chain (576 aa).

Cysteine 62, cysteine 65, cysteine 547, and cysteine 550 together coordinate Ni(2+).

This sequence belongs to the [NiFe]/[NiFeSe] hydrogenase large subunit family. As to quaternary structure, heterodimer of a large and a small subunit. Ni(2+) serves as cofactor.

The protein localises to the cell membrane. The enzyme catalyses H2 + a menaquinone = a menaquinol. This enzyme recycles the H(2) produced by nitrogenase to increase the production of ATP and to protect nitrogenase against inhibition or damage by O(2) under carbon- or phosphate-limited conditions. The polypeptide is Quinone-reactive Ni/Fe-hydrogenase large chain (hydB) (Wolinella succinogenes (strain ATCC 29543 / DSM 1740 / CCUG 13145 / JCM 31913 / LMG 7466 / NCTC 11488 / FDC 602W) (Vibrio succinogenes)).